The chain runs to 278 residues: Ras-related protein rapC (278 aa).

A GTP-binding site is contributed by 10–17 (GASGTGKT). The Effector region motif lies at 32–40 (YDPTIEDLY). Residues 58–62 (DTSGT) and 119–122 (NKCD) each bind GTP. Disordered regions lie at residues 176-209 (NGSS…SSSS) and 236-278 (STSS…CLIM). Low complexity-rich tracts occupy residues 198–209 (GSNNSSINSSSS) and 236–251 (STSS…SQTN). C275 is modified (cysteine methyl ester). A lipid anchor (S-geranylgeranyl cysteine) is attached at C275. The propeptide at 276–278 (LIM) is removed in mature form.

It belongs to the small GTPase superfamily. Ras family.

The protein localises to the cell membrane. It carries out the reaction GTP + H2O = GDP + phosphate + H(+). In Dictyostelium discoideum (Social amoeba), this protein is Ras-related protein rapC (rapC).